The chain runs to 148 residues: 3-hydroxyacyl-[acyl-carrier-protein] dehydratase FabZ (148 aa).

The active site involves H50.

This sequence belongs to the thioester dehydratase family. FabZ subfamily.

Its subcellular location is the cytoplasm. It catalyses the reaction a (3R)-hydroxyacyl-[ACP] = a (2E)-enoyl-[ACP] + H2O. Its function is as follows. Involved in unsaturated fatty acids biosynthesis. Catalyzes the dehydration of short chain beta-hydroxyacyl-ACPs and long chain saturated and unsaturated beta-hydroxyacyl-ACPs. This is 3-hydroxyacyl-[acyl-carrier-protein] dehydratase FabZ from Lactobacillus helveticus (strain DPC 4571).